Reading from the N-terminus, the 1072-residue chain is MPKRLDINTILVIGSGPIVIGQAAEFDYSGTQACQSLKEEGYKVILVNSNPATIMTDTATADKVYIEPLTLEFVSRIIRKERPDAILPTLGGQTGLNMAVELAKSGVLEECGVEILGTKLSAIEQAEDRDLFRTLMQELNEPTPPSEIIHNLDEAYGFVNEIGYPVIVRPAFTLGGTGGGICHNEEELIEIVTSGLKHSPVTQCLLEKSIAGCKEIEYEVMRDSNDNAIVVCNMENIDPVGVHTGDSIVVAPSQTLSDREYQMLRNTSLRIIRALGIEGGCNVQLALDPYSFQYYVIEVNPRVSRSSALASKATGYPIAKLAAKIAVGLTLDEIVNPVTQKTYACFEPALDYVVSKIPRWPFDKFESANRTLGTQMKATGEVMSIGRNLEESLLKAVRSLELGIYHLELDHLKELDKETMKKRIIKADDERLFIVAEAIRQGVTKEEINEWCEMDFFFLQKVENIVNMEREVKANVGNMEVLQTAKEMGFSDHYIAAAWNKTEREIYDMRKENNMTPVFKMVDTCAAEFESATPYYYSTYADENESIVTDRKSVVVLGSGPIRIGQGVEFDYATVHSVWAIKEAGYEAIIINNNPETVSTDFSISDKLYFEPLTIEDVMHIIDLEKPEGVIVQFGGQTAINLAAKLEEHGVKILGTSLEDLDRAEDRDKFEAALTKLGIPQPVGKTATTVEQAVAIAEEIGYPVLVRPSYVLGGRAMEIVYRQEELLHYMKNAVKVHADHPVLIDRYMVGKEIEVDAISDGENVFIPGIMEHIERAGVHSGDSIGVYPPQSLSEKLKEQIIEHTIALGKGLNIVGLLNIQFVVFKDQVYVIEVNPRASRTVPFLSKITGVPMANVATKVILGQDLVEQGYGTGYHPEEKEVYVKAPVFSFAKLRSVDTTLGPEMKSTGEVMGKDLTLEKALYKGLVASGINIPTHGSVIITVADKDKEEAMEIAKRFHEIGYNLLATAGTAQSLTEQNIPVQVVNKIDSEDYNLLDIIRQGKAQFVINTLTKGKQPARDGFRIRRESVENGVACLTSLDTTRAILRVLESMTFSAHSMKEITQTKRHEVVHA.

Positions 1-401 (MPKRLDINTI…SLLKAVRSLE (401 aa)) are carboxyphosphate synthetic domain. Positions 129, 169, 175, 176, 208, 210, 215, 241, 242, 243, 284, and 298 each coordinate ATP. Residues 133–327 (RTLMQELNEP…IAKLAAKIAV (195 aa)) form the ATP-grasp 1 domain. 3 residues coordinate Mg(2+): Q284, E298, and N300. Mn(2+) is bound by residues Q284, E298, and N300. The tract at residues 402–546 (LGIYHLELDH…YSTYADENES (145 aa)) is oligomerization domain. Residues 547 to 929 (IVTDRKSVVV…ALYKGLVASG (383 aa)) form a carbamoyl phosphate synthetic domain region. In terms of domain architecture, ATP-grasp 2 spans 671 to 861 (EAALTKLGIP…MANVATKVIL (191 aa)). ATP is bound by residues R707, R746, E752, G777, V778, H779, S780, Q820, and E832. Residues Q820, E832, and N834 each contribute to the Mg(2+) site. Mn(2+)-binding residues include Q820, E832, and N834. Residues 930-1072 (INIPTHGSVI…QTKRHEVVHA (143 aa)) enclose the MGS-like domain. Positions 930 to 1072 (INIPTHGSVI…QTKRHEVVHA (143 aa)) are allosteric domain.

The protein belongs to the CarB family. As to quaternary structure, composed of two chains; the small (or glutamine) chain promotes the hydrolysis of glutamine to ammonia, which is used by the large (or ammonia) chain to synthesize carbamoyl phosphate. Tetramer of heterodimers (alpha,beta)4. Mg(2+) is required as a cofactor. Mn(2+) serves as cofactor.

It catalyses the reaction hydrogencarbonate + L-glutamine + 2 ATP + H2O = carbamoyl phosphate + L-glutamate + 2 ADP + phosphate + 2 H(+). The enzyme catalyses hydrogencarbonate + NH4(+) + 2 ATP = carbamoyl phosphate + 2 ADP + phosphate + 2 H(+). The protein operates within amino-acid biosynthesis; L-arginine biosynthesis; carbamoyl phosphate from bicarbonate: step 1/1. Its pathway is pyrimidine metabolism; UMP biosynthesis via de novo pathway; (S)-dihydroorotate from bicarbonate: step 1/3. Functionally, large subunit of the glutamine-dependent carbamoyl phosphate synthetase (CPSase). CPSase catalyzes the formation of carbamoyl phosphate from the ammonia moiety of glutamine, carbonate, and phosphate donated by ATP, constituting the first step of 2 biosynthetic pathways, one leading to arginine and/or urea and the other to pyrimidine nucleotides. The large subunit (synthetase) binds the substrates ammonia (free or transferred from glutamine from the small subunit), hydrogencarbonate and ATP and carries out an ATP-coupled ligase reaction, activating hydrogencarbonate by forming carboxy phosphate which reacts with ammonia to form carbamoyl phosphate. The polypeptide is Carbamoyl phosphate synthase large chain (Bacillus cereus (strain AH820)).